The sequence spans 102 residues: Movement protein (102 aa).

Residues 43 to 63 (VVALIVILFAVGIVYLAYTLF) form a helical membrane-spanning segment. The tract at residues 82-102 (IGFGNTPLRRPGEGNPNGGPV) is disordered.

It belongs to the mastrevirus movement protein family. Interacts with the capsid protein (CP). Part of a MP-CP-viral DNA complex.

The protein localises to the host membrane. Functionally, involved in the viral transport within, and between cells. In Tobacco yellow dwarf virus (strain Australia) (TYDV), this protein is Movement protein.